Here is a 338-residue protein sequence, read N- to C-terminus: 4-hydroxythreonine-4-phosphate dehydrogenase (338 aa).

H136 and T137 together coordinate substrate. A divalent metal cation is bound by residues H173, H218, and H273. Positions 281, 290, and 299 each coordinate substrate.

The protein belongs to the PdxA family. As to quaternary structure, homodimer. Zn(2+) serves as cofactor. Requires Mg(2+) as cofactor. The cofactor is Co(2+).

The protein localises to the cytoplasm. The enzyme catalyses 4-(phosphooxy)-L-threonine + NAD(+) = 3-amino-2-oxopropyl phosphate + CO2 + NADH. Its pathway is cofactor biosynthesis; pyridoxine 5'-phosphate biosynthesis; pyridoxine 5'-phosphate from D-erythrose 4-phosphate: step 4/5. Catalyzes the NAD(P)-dependent oxidation of 4-(phosphooxy)-L-threonine (HTP) into 2-amino-3-oxo-4-(phosphooxy)butyric acid which spontaneously decarboxylates to form 3-amino-2-oxopropyl phosphate (AHAP). This is 4-hydroxythreonine-4-phosphate dehydrogenase from Ralstonia nicotianae (strain ATCC BAA-1114 / GMI1000) (Ralstonia solanacearum).